The following is a 421-amino-acid chain: Large ribosomal subunit protein uL4 (421 aa).

Ala-2 bears the N-acetylalanine mark. Lys-14 carries the post-translational modification N6-acetyllysine. Omega-N-methylarginine is present on Arg-97. An N6-acetyllysine modification is found at Lys-106. Residue Lys-239 forms a Glycyl lysine isopeptide (Lys-Gly) (interchain with G-Cter in SUMO2) linkage. Lys-259 is subject to N6-acetyllysine. Thr-266 is modified (phosphothreonine). Position 290 is a phosphoserine (Ser-290). Citrulline is present on Arg-300. Lys-327 is covalently cross-linked (Glycyl lysine isopeptide (Lys-Gly) (interchain with G-Cter in SUMO2)). N6-acetyllysine is present on residues Lys-333 and Lys-353. Positions 359 to 421 (EAKSEEKGVP…PTTEEKKPAA (63 aa)) are disordered. Position 361 is an N6-acetyllysine; alternate (Lys-361). Lys-361 participates in a covalent cross-link: Glycyl lysine isopeptide (Lys-Gly) (interchain with G-Cter in SUMO1); alternate. Ser-362 bears the Phosphoserine mark. The segment covering 368-391 (PGKKPRRKKGKKTVGVKKPKKPVV) has biased composition (basic residues). Residues 401-421 (PAADKKPAEKKPTTEEKKPAA) are compositionally biased toward basic and acidic residues.

This sequence belongs to the universal ribosomal protein uL4 family. In terms of assembly, component of the large ribosomal subunit. May bind IPO9 with low affinity. Interacts with RBM3. Citrullinated by PADI4.

It localises to the cytoplasm. Its function is as follows. Component of the large ribosomal subunit. The ribosome is a large ribonucleoprotein complex responsible for the synthesis of proteins in the cell. The protein is Large ribosomal subunit protein uL4 (RPL4) of Canis lupus familiaris (Dog).